Consider the following 498-residue polypeptide: Glutamyl-tRNA(Gln) amidotransferase subunit A (498 aa).

Residues Lys-85 and Ser-160 each act as charge relay system in the active site. The Acyl-ester intermediate role is filled by Ser-184.

Belongs to the amidase family. GatA subfamily. Heterotrimer of A, B and C subunits.

The catalysed reaction is L-glutamyl-tRNA(Gln) + L-glutamine + ATP + H2O = L-glutaminyl-tRNA(Gln) + L-glutamate + ADP + phosphate + H(+). Its function is as follows. Allows the formation of correctly charged Gln-tRNA(Gln) through the transamidation of misacylated Glu-tRNA(Gln) in organisms which lack glutaminyl-tRNA synthetase. The reaction takes place in the presence of glutamine and ATP through an activated gamma-phospho-Glu-tRNA(Gln). The polypeptide is Glutamyl-tRNA(Gln) amidotransferase subunit A (Mycolicibacterium vanbaalenii (strain DSM 7251 / JCM 13017 / BCRC 16820 / KCTC 9966 / NRRL B-24157 / PYR-1) (Mycobacterium vanbaalenii)).